A 245-amino-acid chain; its full sequence is Probable ABC transporter ATP-binding protein p29 (245 aa).

The ABC transporter domain occupies 7–245 (LSFEKVSIIY…KEQLYKIYDN (239 aa)). ATP is bound at residue 39-46 (GKSGVGKS).

This sequence belongs to the ABC transporter superfamily.

Its function is as follows. Part of a high-affinity transport system. This chain is Probable ABC transporter ATP-binding protein p29 (p29), found in Mycoplasma genitalium (strain ATCC 33530 / DSM 19775 / NCTC 10195 / G37) (Mycoplasmoides genitalium).